Here is a 538-residue protein sequence, read N- to C-terminus: Cytochrome P450 52-M1 (538 aa).

The helical transmembrane segment at 18 to 38 threads the bilayer; that stretch reads GLLPLLFVAFLVLHEPIWLLW. Cys484 contributes to the heme binding site.

Belongs to the cytochrome P450 family. Heme is required as a cofactor.

It is found in the membrane. It catalyses the reaction an omega-methyl-long-chain fatty acid + reduced [NADPH--hemoprotein reductase] + O2 = an omega-hydroxy-long-chain fatty acid + oxidized [NADPH--hemoprotein reductase] + H2O + H(+). The catalysed reaction is an (omega-1)-ethyl fatty acid + reduced [NADPH--hemoprotein reductase] + O2 = an (omega-1)-hydroxy-long-chain fatty acid + oxidized [NADPH--hemoprotein reductase] + H2O + H(+). It carries out the reaction (9Z)-octadecenoate + reduced [NADPH--hemoprotein reductase] + O2 = 18-hydroxy-(9Z)-octadecenoate + oxidized [NADPH--hemoprotein reductase] + H2O + H(+). The enzyme catalyses (9Z)-octadecenoate + reduced [NADPH--hemoprotein reductase] + O2 = 17-hydroxy-(9Z)-octadecenoate + oxidized [NADPH--hemoprotein reductase] + H2O + H(+). It catalyses the reaction (9Z,12Z)-octadecadienoate + reduced [NADPH--hemoprotein reductase] + O2 = 18-hydroxy-(9Z,12Z)-octadecadienoate + oxidized [NADPH--hemoprotein reductase] + H2O + H(+). The catalysed reaction is (9Z,12Z)-octadecadienoate + reduced [NADPH--hemoprotein reductase] + O2 = 17-hydroxy-(9Z,12Z)-octadecadienoate + oxidized [NADPH--hemoprotein reductase] + H2O + H(+). It carries out the reaction hexadecanoate + reduced [NADPH--hemoprotein reductase] + O2 = 16-hydroxyhexadecanoate + oxidized [NADPH--hemoprotein reductase] + H2O + H(+). The enzyme catalyses (9Z)-hexadecenoate + reduced [NADPH--hemoprotein reductase] + O2 = (9Z)-16-hydroxyhexadec-9-enoate + oxidized [NADPH--hemoprotein reductase] + H2O + H(+). It catalyses the reaction octadecanoate + reduced [NADPH--hemoprotein reductase] + O2 = 18-hydroxyoctadecanoate + oxidized [NADPH--hemoprotein reductase] + H2O + H(+). Its function is as follows. Catalyzes the first step of sophorolipid biosynthesis. Catalyzes the terminal (at the omega-position) or subterminal (at the omega(-1)-position) hydroxylation of a fatty acid. This converts the fatty acid to a substrate for the subsequent glycosyltransferase reactions. Oleic acid is the preferred substrate, but it acts on various other C-16, C-18 and C-20 saturated and unsaturated fatty acids, namely palmitic, palmitoleic, stearic, linoleic, cis-9,10-epoxystearic, trans-9,10-epoxystearic and arachidonic acid. The polypeptide is Cytochrome P450 52-M1 (Starmerella bombicola (Yeast)).